Reading from the N-terminus, the 170-residue chain is MKKKNGRDSKELADFALGESQTNYPETYAPEVLEAFDNKNPGKIAWTTFVCTEFTSLCPKTRQPDFAKIFINYIADKKMVESKSLKLYLFSFRNHGDFHEDCVQTICDDLVKLMKPKYIEVIGEFTPRGGIAIYPYANYAAKDKFFQELYKKRMSEYAPGKYSMELSKLY.

Cys-58 acts as the Thioimide intermediate in catalysis. Asp-65 (proton donor) is an active-site residue. Substrate contacts are provided by residues 80–82 and 99–100; these read VES and HE.

This sequence belongs to the GTP cyclohydrolase I family. QueF type 1 subfamily.

The protein localises to the cytoplasm. It carries out the reaction 7-aminomethyl-7-carbaguanine + 2 NADP(+) = 7-cyano-7-deazaguanine + 2 NADPH + 3 H(+). The protein operates within tRNA modification; tRNA-queuosine biosynthesis. Functionally, catalyzes the NADPH-dependent reduction of 7-cyano-7-deazaguanine (preQ0) to 7-aminomethyl-7-deazaguanine (preQ1). This chain is NADPH-dependent 7-cyano-7-deazaguanine reductase, found in Bdellovibrio bacteriovorus (strain ATCC 15356 / DSM 50701 / NCIMB 9529 / HD100).